The sequence spans 308 residues: Aspartate carbamoyltransferase catalytic subunit (308 aa).

Arg59 and Thr60 together coordinate carbamoyl phosphate. Residue Lys87 participates in L-aspartate binding. Arg109, His139, and Gln142 together coordinate carbamoyl phosphate. L-aspartate contacts are provided by Arg172 and Arg224. Residues Ala265 and Pro266 each coordinate carbamoyl phosphate.

It belongs to the aspartate/ornithine carbamoyltransferase superfamily. ATCase family. In terms of assembly, heterododecamer (2C3:3R2) of six catalytic PyrB chains organized as two trimers (C3), and six regulatory PyrI chains organized as three dimers (R2).

It carries out the reaction carbamoyl phosphate + L-aspartate = N-carbamoyl-L-aspartate + phosphate + H(+). It functions in the pathway pyrimidine metabolism; UMP biosynthesis via de novo pathway; (S)-dihydroorotate from bicarbonate: step 2/3. Catalyzes the condensation of carbamoyl phosphate and aspartate to form carbamoyl aspartate and inorganic phosphate, the committed step in the de novo pyrimidine nucleotide biosynthesis pathway. The polypeptide is Aspartate carbamoyltransferase catalytic subunit (Streptococcus thermophilus (strain ATCC BAA-491 / LMD-9)).